Consider the following 619-residue polypeptide: Nuclear hormone receptor family member nhr-6 (619 aa).

Residues 1–18 (MEQLSIQTDELQDQFSNC) are compositionally biased toward polar residues. 4 disordered regions span residues 1-29 (MEQL…SYSS), 58-86 (MSKN…SKTT), 103-134 (QVNT…HRLP), and 196-232 (QHFP…PTSP). Low complexity predominate over residues 19–29 (SPASVDSSYSS). A compositionally biased stretch (polar residues) spans 125-134 (KPSSSSHRLP). A compositionally biased stretch (low complexity) spans 206 to 232 (GSQGTTSSSNNTGGTPSPHSSSLPTSP). A DNA-binding region (nuclear receptor) is located at residues 265–340 (DKMCAVCNDR…VGMVKEIVRH (76 aa)). NR C4-type zinc fingers lie at residues 268-288 (CAVC…CEGC) and 304-328 (CAGN…YQKC). The disordered stretch occupies residues 345–365 (GRRGRLSSKTKLARSEDQPSP). The span at 346 to 356 (RRGRLSSKTKL) shows a compositional bias: basic residues. The NR LBD domain occupies 365 to 600 (PPLPLLALMG…STDAPPACGS (236 aa)). Positions 589 to 600 (LRSTDAPPACGS) are AF-2.

This sequence belongs to the nuclear hormone receptor family. NR4 subfamily. As to expression, in hermaphrodites, expressed in the developing spermatheca and dorsal uterus. Expression includes the 8 cells of the dorsal somatic gonad primordium and the sujc cells that form the core of the spermatheca-uterine valve. Expressed in the precursor cells of the spermatheca-sheath lineages (SS cells) and in the precursors and descendents of the dorsal-uterine lineage (DU cells). In both hermaphroditic and male animals, expressed in a pair of head chemosensory neurons.

Its subcellular location is the nucleus. Its function is as follows. Transcriptional activator that induces gene expression by binding to the NGFI-B response element (NBRE) 5'-AAAGGTCA-3'. Required for proper morphogenesis of the spermatheca and the spermatheca-uterine valve formation. Promotes cell proliferation and differentiation of the spermatheca precursor cells during spermatheca development in larval stage L4. Might play a role in promoting G1/S phase progression in the spermatheca precursor cell lineage. Also required for the differentiation of the spermatheca-uterine junction core (sujc) cells which are generating the spermatheca-uterine valve. The chain is Nuclear hormone receptor family member nhr-6 (nhr-6) from Caenorhabditis elegans.